We begin with the raw amino-acid sequence, 339 residues long: Probable cytosolic iron-sulfur protein assembly protein CIAO1 (339 aa).

WD repeat units follow at residues 14 to 53 (HPDS…WICK), 59 to 98 (GHQR…FECV), 103 to 142 (GHEN…EYEC), 148 to 187 (SHTQ…WVCC), 192 to 231 (GHES…NEQG), 250 to 289 (FHSR…DPQQ), and 301 to 339 (AHSQ…PEGL). The short motif at 176–178 (LYR) is the LYR motif; required for interaction with HSC20 element.

The protein belongs to the WD repeat CIA1 family. As to quaternary structure, component of the CIA complex. Interacts with CIAO2A and forms a complex with CIAO2B and MMS19; the interactions with CIAO2A and CIAO2B are mutually exclusive. Interacts with CHD1L, ERCC2, IREB2 and POLD1. Component of the MMXD complex, which includes CIAO1, ERCC2, CIAO2B, MMS19 and SLC25A5. Interacts with WT1. Interacts with CIAO3. Interacts (via LYR motif) with HSC20.

The protein localises to the cytoplasm. Its function is as follows. Key component of the cytosolic iron-sulfur protein assembly (CIA) complex, a multiprotein complex that mediates the incorporation of iron-sulfur cluster into extramitochondrial Fe/S proteins. As a CIA complex component, interacts specifically with CIAO2A or CIAO2B and MMS19 to assist different branches of iron-sulfur protein assembly, depending of its interactors. The complex CIAO1:CIAO2B:MMS19 binds to and facilitates the assembly of most cytosolic-nuclear Fe/S proteins. CIAO1:CIAO2A specifically matures ACO1 and stabilizes IREB2. Seems to specifically modulate the transactivation activity of WT1. As part of the mitotic spindle-associated MMXD complex it may play a role in chromosome segregation. This chain is Probable cytosolic iron-sulfur protein assembly protein CIAO1, found in Homo sapiens (Human).